Consider the following 865-residue polypeptide: DNA topoisomerase 3-beta (865 aa).

The Toprim domain maps to Arg6–Val151. Mg(2+) contacts are provided by Glu12, Asp116, and Asp118. One can recognise a Topo IA-type catalytic domain in the interval Asn167–Phe587. Residues Ser209–Gln214 form an interaction with DNA region. Catalysis depends on Tyr331, which acts as the O-(5'-phospho-DNA)-tyrosine intermediate. The span at Arg833–Ser853 shows a compositional bias: basic residues. Residues Arg833–Phe865 are disordered. Residues Lys854–Phe865 are compositionally biased toward basic and acidic residues.

The protein belongs to the type IA topoisomerase family. Mg(2+) is required as a cofactor.

The enzyme catalyses ATP-independent breakage of single-stranded DNA, followed by passage and rejoining.. Releases the supercoiling and torsional tension of DNA introduced during the DNA replication and transcription by transiently cleaving and rejoining one strand of the DNA duplex. Introduces a single-strand break via transesterification at a target site in duplex DNA. The scissile phosphodiester is attacked by the catalytic tyrosine of the enzyme, resulting in the formation of a DNA-(5'-phosphotyrosyl)-enzyme intermediate and the expulsion of a 3'-OH DNA strand. The free DNA strand than undergoes passage around the unbroken strand thus removing DNA supercoils. Finally, in the religation step, the DNA 3'-OH attacks the covalent intermediate to expel the active-site tyrosine and restore the DNA phosphodiester backbone. The chain is DNA topoisomerase 3-beta from Arabidopsis thaliana (Mouse-ear cress).